A 310-amino-acid polypeptide reads, in one-letter code: UDP-N-acetylenolpyruvoylglucosamine reductase (310 aa).

Residues Thr34–Glu211 form the FAD-binding PCMH-type domain. Arg177 is a catalytic residue. The Proton donor role is filled by Ser225. Glu295 is a catalytic residue.

This sequence belongs to the MurB family. Requires FAD as cofactor.

The protein localises to the cytoplasm. The catalysed reaction is UDP-N-acetyl-alpha-D-muramate + NADP(+) = UDP-N-acetyl-3-O-(1-carboxyvinyl)-alpha-D-glucosamine + NADPH + H(+). Its pathway is cell wall biogenesis; peptidoglycan biosynthesis. Its function is as follows. Cell wall formation. The protein is UDP-N-acetylenolpyruvoylglucosamine reductase of Beijerinckia indica subsp. indica (strain ATCC 9039 / DSM 1715 / NCIMB 8712).